The primary structure comprises 454 residues: MKKLSVVILAAGKGTRMYSDLPKVLHKIAGKPMVKHVIDTAKQLSADQIHLIYGHGADLLKSHLADEPVNWVFQAEQLGTGHAMQQAAPFFADDENILMLYGDSPLISKETLEKLIAAKPENGIALLTVNLDNPTGYGRIIREKGSVVAIVEQKDADAEQLKITEVNTGVMVSDGASFKKWLGRLNNNNAQGEYYMTDVIGLANQDGFQVAAVSATDKMEVEGANNRLQLAALERYYQHKQAERLLLEGVMLIDPARFDLRGTLEHGKDCEIDVNVIIEGSVKLGDRVKIGAGCVIKNCEIGDDVEIKPYSVFEDSTIGARASIGPFSRLRPGAELAEETHIGNFVEIKKATVGKGSKVNHLTYVGDAQVGTDCNLGAGVITCNYDGANKFKTVIGDNVFVGSDVQLVAPVNVANGATIGAGTTVTKDIGENELVISRVPQRHIAGWQRPTKKK.

Residues 1 to 227 (MKKLSVVILA…KMEVEGANNR (227 aa)) are pyrophosphorylase. UDP-N-acetyl-alpha-D-glucosamine is bound by residues 9–12 (LAAG), Lys23, Gln74, 79–80 (GT), 101–103 (YGD), Gly138, Glu152, Asn167, and Asn225. Asp103 lines the Mg(2+) pocket. Residue Asn225 coordinates Mg(2+). The segment at 228–248 (LQLAALERYYQHKQAERLLLE) is linker. The segment at 249–454 (GVMLIDPARF…AGWQRPTKKK (206 aa)) is N-acetyltransferase. UDP-N-acetyl-alpha-D-glucosamine contacts are provided by Arg331 and Lys349. Catalysis depends on His361, which acts as the Proton acceptor. UDP-N-acetyl-alpha-D-glucosamine contacts are provided by Tyr364 and Asn375. Acetyl-CoA-binding positions include Ala378, 384–385 (NY), Ser403, Ala421, and Arg438.

It in the N-terminal section; belongs to the N-acetylglucosamine-1-phosphate uridyltransferase family. In the C-terminal section; belongs to the transferase hexapeptide repeat family. As to quaternary structure, homotrimer. The cofactor is Mg(2+).

The protein localises to the cytoplasm. It catalyses the reaction alpha-D-glucosamine 1-phosphate + acetyl-CoA = N-acetyl-alpha-D-glucosamine 1-phosphate + CoA + H(+). The enzyme catalyses N-acetyl-alpha-D-glucosamine 1-phosphate + UTP + H(+) = UDP-N-acetyl-alpha-D-glucosamine + diphosphate. The protein operates within nucleotide-sugar biosynthesis; UDP-N-acetyl-alpha-D-glucosamine biosynthesis; N-acetyl-alpha-D-glucosamine 1-phosphate from alpha-D-glucosamine 6-phosphate (route II): step 2/2. It participates in nucleotide-sugar biosynthesis; UDP-N-acetyl-alpha-D-glucosamine biosynthesis; UDP-N-acetyl-alpha-D-glucosamine from N-acetyl-alpha-D-glucosamine 1-phosphate: step 1/1. Its pathway is bacterial outer membrane biogenesis; LPS lipid A biosynthesis. Its function is as follows. Catalyzes the last two sequential reactions in the de novo biosynthetic pathway for UDP-N-acetylglucosamine (UDP-GlcNAc). The C-terminal domain catalyzes the transfer of acetyl group from acetyl coenzyme A to glucosamine-1-phosphate (GlcN-1-P) to produce N-acetylglucosamine-1-phosphate (GlcNAc-1-P), which is converted into UDP-GlcNAc by the transfer of uridine 5-monophosphate (from uridine 5-triphosphate), a reaction catalyzed by the N-terminal domain. This is Bifunctional protein GlmU from Mannheimia succiniciproducens (strain KCTC 0769BP / MBEL55E).